Here is a 175-residue protein sequence, read N- to C-terminus: MTLHVGAEPAPREEEIAEMADEPRELEFDLSVQYGDEVTGDVRKACPKRKLIAEWIEPALFSSAQLTVRFVGEEEGRTLNDGYRHKDYPTNVLTFAYDPLPDGTVIGDLVLCCPVVEKEAQEQGKPLAAHYAHLLVHGALHAQGYDHETSEEDAAEMEALEVAILAKLGFPNPYQ.

3 residues coordinate Zn(2+): His-137, His-141, and His-147.

The protein belongs to the endoribonuclease YbeY family. The cofactor is Zn(2+).

The protein resides in the cytoplasm. Single strand-specific metallo-endoribonuclease involved in late-stage 70S ribosome quality control and in maturation of the 3' terminus of the 16S rRNA. This is Endoribonuclease YbeY from Burkholderia ambifaria (strain ATCC BAA-244 / DSM 16087 / CCUG 44356 / LMG 19182 / AMMD) (Burkholderia cepacia (strain AMMD)).